Consider the following 569-residue polypeptide: AP-4 complex accessory subunit Tepsin (569 aa).

Residues 8–141 form the ENTH domain; that stretch reads RDRLSFLHRL…FSDALPQPPS (134 aa). The tract at residues 196–298 is disordered; sequence VRPGPDNPCT…SGASREPGDL (103 aa). Residues 219–229 show a composition bias toward polar residues; the sequence is VTPSASHTHPN. Residues 260–292 show a composition bias toward low complexity; that stretch reads SSPSSQNSSCTSNLSRASDSVSRSGSDSHSGAS. A Phosphoserine modification is found at Ser-400. The segment at 467 to 524 is disordered; that stretch reads VPRSPVPTPSPDTLPPALQDPGELRTQLVCSSEPGTGSEQRLENTDTPKDSSSPCPWS. The segment covering 470 to 480 has biased composition (pro residues); it reads SPVPTPSPDTL. Positions 494 to 505 are enriched in polar residues; that stretch reads LVCSSEPGTGSE. Basic and acidic residues predominate over residues 506–515; that stretch reads QRLENTDTPK. The interaction with AP4B1 stretch occupies residues 525-535; sequence PNSLFAGMELV. An interaction with AP4E1 region spans residues 559–569; sequence SEPSAFAFLNM.

In terms of assembly, interacts with AP4B1 and AP4E1; the interaction is direct and mediates the association of TEPSIN with the adapter-like complex 4 (AP-4), a heterotetramer composed of AP4B1, AP4E1, AP4M1 and AP4S1.

The protein resides in the golgi apparatus. It localises to the trans-Golgi network membrane. Its subcellular location is the cytoplasmic vesicle. It is found in the cytoplasm. The protein localises to the cytosol. Its function is as follows. Associates with the adapter-like complex 4 (AP-4) and may therefore play a role in vesicular trafficking of proteins at the trans-Golgi network. This Rattus norvegicus (Rat) protein is AP-4 complex accessory subunit Tepsin.